A 307-amino-acid polypeptide reads, in one-letter code: UDP-N-acetylenolpyruvoylglucosamine reductase (307 aa).

The 167-residue stretch at 27 to 193 folds into the FAD-binding PCMH-type domain; the sequence is RVGGPADVVF…LDAVFEGLAD (167 aa). The active site involves Arg-172. Residue Ser-222 is the Proton donor of the active site. The active site involves Glu-299.

The protein belongs to the MurB family. FAD is required as a cofactor.

Its subcellular location is the cytoplasm. The catalysed reaction is UDP-N-acetyl-alpha-D-muramate + NADP(+) = UDP-N-acetyl-3-O-(1-carboxyvinyl)-alpha-D-glucosamine + NADPH + H(+). It participates in cell wall biogenesis; peptidoglycan biosynthesis. Functionally, cell wall formation. The polypeptide is UDP-N-acetylenolpyruvoylglucosamine reductase (Caulobacter sp. (strain K31)).